Reading from the N-terminus, the 671-residue chain is Phenol 2-monooxygenase (671 aa).

FAD is bound by residues Asp10–Asp43 and Leu295–Asp305.

This sequence belongs to the PheA/TfdB FAD monooxygenase family. The cofactor is FAD.

The protein localises to the cytoplasm. It catalyses the reaction phenol + NADPH + O2 + H(+) = catechol + NADP(+) + H2O. It participates in aromatic compound metabolism; phenol degradation. Functionally, hydroxylates phenol to catechol. Also acts on cresols. This chain is Phenol 2-monooxygenase (tbuD), found in Ralstonia pickettii (Burkholderia pickettii).